A 125-amino-acid polypeptide reads, in one-letter code: Conopressin-conophysin, isoform 1 (125 aa).

An N-terminal signal peptide occupies residues 1 to 22 (MQMGRPTLLPCLLLLLVLSTQA). Cys23 and Cys28 are disulfide-bonded. Residue Gly31 is modified to Glycine amide. The propeptide occupies 32-39 (GKRDVHMI). Cystine bridges form between Cys45–Cys85, Cys48–Cys59, Cys53–Cys75, Cys60–Cys65, Cys92–Cys112, Cys104–Cys124, and Cys113–Cys118.

The protein belongs to the vasopressin/oxytocin family. In terms of tissue distribution, expressed by the venom gland.

It is found in the secreted. Targets vasopressin-oxytocin related receptors. This chain is Conopressin-conophysin, isoform 1, found in Conus monile (Necklace cone).